The sequence spans 797 residues: LPS-assembly protein LptD (797 aa).

The first 20 residues, 1–20 (MHTIRCLILSALSVAGAAQA), serve as a signal peptide directing secretion. Residues 23–45 (SQDAAPAGRQPVGSVASPGLEMP) are disordered.

The protein belongs to the LptD family. In terms of assembly, component of the lipopolysaccharide transport and assembly complex. Interacts with LptE and LptA.

Its subcellular location is the cell outer membrane. Its function is as follows. Together with LptE, is involved in the assembly of lipopolysaccharide (LPS) at the surface of the outer membrane. This Bordetella avium (strain 197N) protein is LPS-assembly protein LptD.